A 243-amino-acid chain; its full sequence is Transmembrane protein 174 (243 aa).

The next 2 helical transmembrane spans lie at 40-60 (LLFS…MGWI) and 73-93 (LLGP…VCKF). Positions 205–229 (AGHDRPSSDADQLEGTQMGEEERVC) are disordered.

As to quaternary structure, interacts with SLC34A1; regulates SLC34A1 internalization by PTH and FGF23.

Its subcellular location is the endoplasmic reticulum membrane. The protein resides in the apical cell membrane. Regulator of plasma phosphate homeostasis. Decreases serum inorganic phosphate (Pi) uptake by regulating the sodium-phosphate cotransporter SLC34A1 trafficking by PTH and FGF23 in the kidney. This Rattus norvegicus (Rat) protein is Transmembrane protein 174 (Tmem174).